Here is a 479-residue protein sequence, read N- to C-terminus: Cardiolipin synthase A (479 aa).

The next 2 membrane-spanning stretches (helical) occupy residues phenylalanine 8–leucine 28 and isoleucine 38–phenylalanine 58. 2 consecutive PLD phosphodiesterase domains span residues isoleucine 218–tyrosine 245 and glutamate 392–serine 419. Residues histidine 223, lysine 225, aspartate 230, histidine 397, lysine 399, and aspartate 404 contribute to the active site.

It belongs to the phospholipase D family. Cardiolipin synthase subfamily. ClsA sub-subfamily.

Its subcellular location is the cell inner membrane. The enzyme catalyses 2 a 1,2-diacyl-sn-glycero-3-phospho-(1'-sn-glycerol) = a cardiolipin + glycerol. Catalyzes the reversible phosphatidyl group transfer from one phosphatidylglycerol molecule to another to form cardiolipin (CL) (diphosphatidylglycerol) and glycerol. The sequence is that of Cardiolipin synthase A from Pseudomonas syringae pv. syringae (strain B728a).